The sequence spans 109 residues: Putative antitoxin HigA3 (109 aa).

The HTH cro/C1-type domain maps to Leu-41–Val-97. Positions Gln-53–Ser-72 form a DNA-binding region, H-T-H motif.

Its function is as follows. Putative antitoxin component of a type II toxin-antitoxin (TA) system. Its cognate toxin would be HigB3. The polypeptide is Putative antitoxin HigA3 (Mycobacterium tuberculosis (strain ATCC 25618 / H37Rv)).